An 891-amino-acid polypeptide reads, in one-letter code: Nitrate reductase [NAD(P)H] (891 aa).

Residues 1-78 (MAASVEYNRQ…VKDPRDEATS (78 aa)) form a disordered region. Over residues 63–76 (LDVEPSVKDPRDEA) the composition is skewed to basic and acidic residues. Residue C168 coordinates Mo-molybdopterin. The 76-residue stretch at 515-590 (SAQFTMSEVR…LEMYRVGELI (76 aa)) folds into the Cytochrome b5 heme-binding domain. Residues H550 and H573 each contribute to the heme site. One can recognise an FAD-binding FR-type domain in the interval 630 to 742 (REKVRCRLVD…KGPVGHIEYA (113 aa)). FAD-binding positions include 682–685 (RAYT), 699–703 (LIKIY), F704, F711, 716–718 (LMS), and T769.

Belongs to the nitrate reductase family. In terms of assembly, homodimer. Requires FAD as cofactor. It depends on heme as a cofactor. Mo-molybdopterin is required as a cofactor.

It carries out the reaction nitrite + NAD(+) + H2O = nitrate + NADH + H(+). The catalysed reaction is nitrite + NADP(+) + H2O = nitrate + NADPH + H(+). Nitrate reductase is a key enzyme involved in the first step of nitrate assimilation in plants, fungi and bacteria. The protein is Nitrate reductase [NAD(P)H] (NAR-7) of Hordeum vulgare (Barley).